The following is a 376-amino-acid chain: Thymidine kinase (376 aa).

Residues 1-39 (MASYPCHQHASAFDQAARSRGHSNRRTALRPRRQQEATE) form a disordered region. Over residues 19–32 (SRGHSNRRTALRPR) the composition is skewed to basic residues. 56–63 (GPHGMGKT) is an ATP binding site. Residue Glu-83 is the Proton acceptor of the active site. The substrate site is built by Tyr-101 and Gln-125. Arg-216 contributes to the ATP binding site. Arg-222 is a binding site for substrate.

This sequence belongs to the herpesviridae thymidine kinase family. In terms of assembly, homodimer.

It catalyses the reaction thymidine + ATP = dTMP + ADP + H(+). Catalyzes the transfer of the gamma-phospho group of ATP to thymidine to generate dTMP in the salvage pathway of pyrimidine synthesis. The dTMP serves as a substrate for DNA polymerase during viral DNA replication. Allows the virus to be reactivated and to grow in non-proliferative cells lacking a high concentration of phosphorylated nucleic acid precursors. The sequence is that of Thymidine kinase from Human herpesvirus 1 (strain CL101) (HHV-1).